Here is a 394-residue protein sequence, read N- to C-terminus: Protein NDRG1 (394 aa).

Ser-2 carries the N-acetylserine modification. Phosphoserine occurs at positions 2, 319, and 326. Positions 325-394 (RSRTASGSSV…AGPKSMEVSC (70 aa)) are disordered. A compositionally biased stretch (polar residues) spans 327–339 (RTASGSSVTSLDG). Position 328 is a phosphothreonine; by SGK1 (Thr-328). Ser-330 and Ser-332 each carry phosphoserine; by SGK1. Ser-333 is subject to Phosphoserine. Thr-335 bears the Phosphothreonine mark. Ser-336 carries the phosphoserine modification. 3 consecutive repeat copies span residues 339-348 (GTRSRSHTSE), 349-358 (GTRSRSHTSE), and 359-368 (GTRSRSHTSE). Residues 339 to 368 (GTRSRSHTSEGTRSRSHTSEGTRSRSHTSE) form a 3 X 10 AA tandem repeats of G-[PST]-R-S-R-S-H-T-S-E region. At Thr-340 the chain carries Phosphothreonine. Ser-342 is modified (phosphoserine). Basic and acidic residues predominate over residues 345 to 371 (HTSEGTRSRSHTSEGTRSRSHTSEGAH). Thr-346 is modified (phosphothreonine; by SGK1). Phosphoserine is present on Ser-352. Thr-356 is modified (phosphothreonine; by SGK1). 2 positions are modified to phosphoserine: Ser-362 and Ser-364. Phosphothreonine occurs at positions 366 and 375.

The protein belongs to the NDRG family. Interacts with RAB4A (membrane-bound form); the interaction involves NDRG1 in vesicular recycling ofCDH1. Interacts with APOA1, APOA2, PRA1 and RTN1. Under stress conditions, phosphorylated in the C-terminal on many serine and threonine residues. Phosphorylated in vitro by PKA. Phosphorylation enhanced by increased intracellular cAMP levels. Homocysteine induces dephosphorylation. Phosphorylation by SGK1 is cell cycle dependent.

The protein localises to the cytoplasm. It localises to the cytosol. The protein resides in the cytoskeleton. It is found in the microtubule organizing center. Its subcellular location is the centrosome. The protein localises to the nucleus. It localises to the cell membrane. Stress-responsive protein involved in hormone responses, cell growth, and differentiation. Acts as a tumor suppressor in many cell types. Necessary but not sufficient for p53/TP53-mediated caspase activation and apoptosis. Has a role in cell trafficking notably of the Schwann cell and is necessary for the maintenance and development of the peripheral nerve myelin sheath. Required for vesicular recycling of CDH1 and TF. May also function in lipid trafficking. Protects cells from spindle disruption damage. Functions in p53/TP53-dependent mitotic spindle checkpoint. Regulates microtubule dynamics and maintains euploidy. The sequence is that of Protein NDRG1 (Ndrg1) from Macaca fascicularis (Crab-eating macaque).